The primary structure comprises 152 residues: Xanthine-guanine phosphoribosyltransferase (152 aa).

Residues 37-38, R69, and 88-96 contribute to the 5-phospho-alpha-D-ribose 1-diphosphate site; these read RG and DDLVDTGGT. R69 contacts GMP. D89 is a binding site for Mg(2+). Positions 92 and 135 each coordinate guanine. D92 and I135 together coordinate xanthine. GMP-binding positions include 92–96 and 134–135; these read DTGGT and WI.

Belongs to the purine/pyrimidine phosphoribosyltransferase family. XGPT subfamily. Homotetramer. Mg(2+) is required as a cofactor.

It is found in the cell inner membrane. It carries out the reaction GMP + diphosphate = guanine + 5-phospho-alpha-D-ribose 1-diphosphate. The enzyme catalyses XMP + diphosphate = xanthine + 5-phospho-alpha-D-ribose 1-diphosphate. It catalyses the reaction IMP + diphosphate = hypoxanthine + 5-phospho-alpha-D-ribose 1-diphosphate. It functions in the pathway purine metabolism; GMP biosynthesis via salvage pathway; GMP from guanine: step 1/1. It participates in purine metabolism; XMP biosynthesis via salvage pathway; XMP from xanthine: step 1/1. In terms of biological role, purine salvage pathway enzyme that catalyzes the transfer of the ribosyl-5-phosphate group from 5-phospho-alpha-D-ribose 1-diphosphate (PRPP) to the N9 position of the 6-oxopurines guanine and xanthine to form the corresponding ribonucleotides GMP (guanosine 5'-monophosphate) and XMP (xanthosine 5'-monophosphate), with the release of PPi. To a lesser extent, also acts on hypoxanthine. The sequence is that of Xanthine-guanine phosphoribosyltransferase from Yersinia pseudotuberculosis serotype O:1b (strain IP 31758).